The sequence spans 210 residues: HTH-type transcriptional regulator TtgR (210 aa).

Positions 10-70 (QETRAQIIEA…ALLDSLHETH (61 aa)) constitute an HTH tetR-type domain. The segment at residues 33–52 (TLADIAELAGVTRGAIYWHF) is a DNA-binding region (H-T-H motif).

As to quaternary structure, homodimer.

Represses expression from the ttgABC operon promoter and its own expression. Binds to a promoter region between the divergently transcribed ttgR and ttgABC genes/operons; in the presence of chloramphenicol or tetracycline this binding no longer occurs and ttgR and ttgABC are derepressed. This suggests that TtgR binds these antibiotics. The polypeptide is HTH-type transcriptional regulator TtgR (ttgR) (Pseudomonas putida (strain DOT-T1E)).